Here is a 152-residue protein sequence, read N- to C-terminus: D-aminoacyl-tRNA deacylase (152 aa).

A Gly-cisPro motif, important for rejection of L-amino acids motif is present at residues 142–143; the sequence is GP.

It belongs to the DTD family. In terms of assembly, homodimer.

It is found in the cytoplasm. The catalysed reaction is glycyl-tRNA(Ala) + H2O = tRNA(Ala) + glycine + H(+). It catalyses the reaction a D-aminoacyl-tRNA + H2O = a tRNA + a D-alpha-amino acid + H(+). Functionally, an aminoacyl-tRNA editing enzyme that deacylates mischarged D-aminoacyl-tRNAs. Also deacylates mischarged glycyl-tRNA(Ala), protecting cells against glycine mischarging by AlaRS. Acts via tRNA-based rather than protein-based catalysis; rejects L-amino acids rather than detecting D-amino acids in the active site. By recycling D-aminoacyl-tRNA to D-amino acids and free tRNA molecules, this enzyme counteracts the toxicity associated with the formation of D-aminoacyl-tRNA entities in vivo and helps enforce protein L-homochirality. The sequence is that of D-aminoacyl-tRNA deacylase from Burkholderia lata (strain ATCC 17760 / DSM 23089 / LMG 22485 / NCIMB 9086 / R18194 / 383).